Here is a 141-residue protein sequence, read N- to C-terminus: Hemoglobin subunit alpha (141 aa).

The Globin domain occupies 1–141; the sequence is VLSSKDKANI…VSTVLTSKYR (141 aa). At S3 the chain carries Phosphoserine. Residues K7 and K11 each carry the N6-succinyllysine modification. At K16 the chain carries N6-acetyllysine; alternate. Position 16 is an N6-succinyllysine; alternate (K16). A Phosphotyrosine modification is found at Y24. N6-succinyllysine is present on K40. S49 carries the post-translational modification Phosphoserine. H58 is an O2 binding site. H87 is a heme b binding site. Position 102 is a phosphoserine (S102). Position 108 is a phosphothreonine (T108). S124 is subject to Phosphoserine. Residues T134 and T137 each carry the phosphothreonine modification. At S138 the chain carries Phosphoserine.

It belongs to the globin family. In terms of assembly, heterotetramer of two alpha chains and two beta chains. Red blood cells.

Functionally, involved in oxygen transport from the lung to the various peripheral tissues. Hemopressin acts as an antagonist peptide of the cannabinoid receptor CNR1. Hemopressin-binding efficiently blocks cannabinoid receptor CNR1 and subsequent signaling. The sequence is that of Hemoglobin subunit alpha (HBA) from Vicugna pacos (Alpaca).